We begin with the raw amino-acid sequence, 305 residues long: Syntaxin-112 (305 aa).

Residue methionine 1 is modified to N-acetylmethionine. Residues 52 to 119 (QEIETIKTLI…TLIETLEKRN (68 aa)) are a coiled coil. The t-SNARE coiled-coil homology domain maps to 210–272 (DLKTKERHEA…SGGTNSLYYA (63 aa)).

It belongs to the syntaxin family. As to quaternary structure, part of the t-SNARE complex.

In terms of biological role, vesicle trafficking protein that functions in the secretory pathway. This Arabidopsis thaliana (Mouse-ear cress) protein is Syntaxin-112 (SYP112).